A 320-amino-acid polypeptide reads, in one-letter code: 2-oxoglutarate-dependent dioxygenase thnC (320 aa).

Residues 174 to 278 (PLVQMKLIRY…HSCATFWHGD (105 aa)) enclose the Fe2OG dioxygenase domain. Residues histidine 199, aspartate 201, and histidine 258 each coordinate Fe cation. Arginine 268 is a binding site for 2-oxoglutarate.

The protein belongs to the iron/ascorbate-dependent oxidoreductase family. It depends on Fe(2+) as a cofactor.

The enzyme catalyses trihazone A + 2-oxoglutarate + O2 + H(+) = trihazone D + succinate + 2 CO2 + H2O. Its pathway is secondary metabolite biosynthesis. Its function is as follows. 2-oxoglutarate-dependent dioxygenase; part of the gene cluster that produces the tetronate natural products trihazones. ThnC catalyzes the oxidative decarboxylation of trihazone A to trihazone D. The C4 hydrogen is first abstracted by the iron-oxo species generated in ThnC to give a tertiary radical at C4. This is followed by decarboxylation and removal of the second electron by the FeIII-OH center to give trihazone D. The pathway begins with the formation of trihazone A by the hybrid PKS-NRPS synthetase thnA and the trans-enoyl reductase thnE. Trihazone A is further decarboxylated by the 2-oxoglutarate-dependent dioxygenase thnC to produce trihazone D. The function of the FAD-dependent monooxygenase thnD has still to be identified. In Trichoderma harzianum (Hypocrea lixii), this protein is 2-oxoglutarate-dependent dioxygenase thnC.